We begin with the raw amino-acid sequence, 309 residues long: Homoserine kinase (309 aa).

91–101 (PIGSGLGSSAC) lines the ATP pocket.

Belongs to the GHMP kinase family. Homoserine kinase subfamily.

Its subcellular location is the cytoplasm. The enzyme catalyses L-homoserine + ATP = O-phospho-L-homoserine + ADP + H(+). It participates in amino-acid biosynthesis; L-threonine biosynthesis; L-threonine from L-aspartate: step 4/5. In terms of biological role, catalyzes the ATP-dependent phosphorylation of L-homoserine to L-homoserine phosphate. This is Homoserine kinase (thrB) from Serratia marcescens.